Reading from the N-terminus, the 381-residue chain is Formate dehydrogenase, mitochondrial (381 aa).

A mitochondrion-targeting transit peptide spans 1-25; the sequence is MAMSRVASTAARAITSPSSLVFTRE. Substrate is bound by residues I125 and N149. NAD(+)-binding positions include T150, 204-205, D224, 259-263, N285, D311, and 335-338; these read RI, PLTEK, and HISG.

Belongs to the D-isomer specific 2-hydroxyacid dehydrogenase family. FDH subfamily. In terms of assembly, homodimer. Found at high levels in developing tubers, at intermediate level in stems, veins, stolons, and stamens, and at low level in leaves and roots.

The protein localises to the mitochondrion. It carries out the reaction formate + NAD(+) = CO2 + NADH. Catalyzes the NAD(+)-dependent oxidation of formate to carbon dioxide. Involved in the cell stress response. Involved in formate-dependent oxygen uptake coupled to ATP synthesis. The polypeptide is Formate dehydrogenase, mitochondrial (Solanum tuberosum (Potato)).